The sequence spans 294 residues: Flavin-dependent thymidylate synthase (294 aa).

One can recognise a ThyX domain in the interval glycine 27–tyrosine 250. FAD is bound by residues threonine 73, arginine 96–arginine 98, and glutamate 104. DUMP is bound by residues glutamine 93 to arginine 96, glutamate 104 to arginine 108, and arginine 189. The ThyX motif motif lies at arginine 96–serine 106. Residues asparagine 205–histidine 207 and histidine 211 contribute to the FAD site. DUMP is bound at residue arginine 216. Arginine 216 acts as the Involved in ionization of N3 of dUMP, leading to its activation in catalysis.

This sequence belongs to the thymidylate synthase ThyX family. Homotetramer. It depends on FAD as a cofactor.

It carries out the reaction dUMP + (6R)-5,10-methylene-5,6,7,8-tetrahydrofolate + NADPH + H(+) = dTMP + (6S)-5,6,7,8-tetrahydrofolate + NADP(+). The protein operates within pyrimidine metabolism; dTTP biosynthesis. Functionally, catalyzes the reductive methylation of 2'-deoxyuridine-5'-monophosphate (dUMP) to 2'-deoxythymidine-5'-monophosphate (dTMP) while utilizing 5,10-methylenetetrahydrofolate (mTHF) as the methyl donor, and NADPH and FADH(2) as the reductant. This Rickettsia bellii (strain RML369-C) protein is Flavin-dependent thymidylate synthase.